The primary structure comprises 190 residues: DNA-invertase hin (190 aa).

Residues 2–135 (ATIGYIRVST…AGLAAARAQG (134 aa)) form the Resolvase/invertase-type recombinase catalytic domain. Catalysis depends on S10, which acts as the O-(5'-phospho-DNA)-serine intermediate. The H-T-H motif DNA-binding region spans 162-181 (RQQLAIIFGIGVSTLYRYFP).

This sequence belongs to the site-specific recombinase resolvase family.

In terms of biological role, a DNA fragment of approximately 900 base pairs, adjacent to the fljB (H2) gene, which specifies the synthesis of phase-2 flagellin, can exist in either orientation with respect to fljB. The orientation of the inversion region controls expression of fljB. The hin gene occupies about two-thirds of the inversion region; it is required for the inversion of the fljB controlling region. In Salmonella typhimurium (strain LT2 / SGSC1412 / ATCC 700720), this protein is DNA-invertase hin (hin).